A 430-amino-acid polypeptide reads, in one-letter code: S-adenosylmethionine synthase (430 aa).

Histidine 14 contacts ATP. Aspartate 16 serves as a coordination point for Mg(2+). Glutamate 42 contacts K(+). Glutamate 55 and glutamine 98 together coordinate L-methionine. A flexible loop region spans residues 98–108; it reads QSPDINRGVER. Residues 164–166, 254–255, aspartate 263, 269–270, alanine 286, and lysine 290 each bind ATP; these read DAK, KF, and RK. Aspartate 263 serves as a coordination point for L-methionine. Lysine 294 provides a ligand contact to L-methionine.

It belongs to the AdoMet synthase family. In terms of assembly, homotetramer; dimer of dimers. Requires Mg(2+) as cofactor. K(+) serves as cofactor.

It localises to the cytoplasm. It carries out the reaction L-methionine + ATP + H2O = S-adenosyl-L-methionine + phosphate + diphosphate. It participates in amino-acid biosynthesis; S-adenosyl-L-methionine biosynthesis; S-adenosyl-L-methionine from L-methionine: step 1/1. In terms of biological role, catalyzes the formation of S-adenosylmethionine (AdoMet) from methionine and ATP. The overall synthetic reaction is composed of two sequential steps, AdoMet formation and the subsequent tripolyphosphate hydrolysis which occurs prior to release of AdoMet from the enzyme. This is S-adenosylmethionine synthase from Bacteroides thetaiotaomicron (strain ATCC 29148 / DSM 2079 / JCM 5827 / CCUG 10774 / NCTC 10582 / VPI-5482 / E50).